The chain runs to 518 residues: Bifunctional purine biosynthesis protein PurH (518 aa).

In terms of domain architecture, MGS-like spans 1–144; that stretch reads MSKRALISVS…KNHAAVTVVC (144 aa).

The protein belongs to the PurH family.

The enzyme catalyses (6R)-10-formyltetrahydrofolate + 5-amino-1-(5-phospho-beta-D-ribosyl)imidazole-4-carboxamide = 5-formamido-1-(5-phospho-D-ribosyl)imidazole-4-carboxamide + (6S)-5,6,7,8-tetrahydrofolate. It catalyses the reaction IMP + H2O = 5-formamido-1-(5-phospho-D-ribosyl)imidazole-4-carboxamide. It functions in the pathway purine metabolism; IMP biosynthesis via de novo pathway; 5-formamido-1-(5-phospho-D-ribosyl)imidazole-4-carboxamide from 5-amino-1-(5-phospho-D-ribosyl)imidazole-4-carboxamide (10-formyl THF route): step 1/1. Its pathway is purine metabolism; IMP biosynthesis via de novo pathway; IMP from 5-formamido-1-(5-phospho-D-ribosyl)imidazole-4-carboxamide: step 1/1. The chain is Bifunctional purine biosynthesis protein PurH from Lactococcus lactis subsp. cremoris (strain SK11).